We begin with the raw amino-acid sequence, 510 residues long: MQLNSTEISQLIKERIAQFEVFNQSYNEGTIISVNDGIIKIYGLSDVMLGEMILLPDNEYAIALNIERDTIGAVVMGPYIHITEGTKVRCTGKILEVPVGVALLGRIVNALGFPIDGKGSIEHDIYLPVEADAPGVIERESINEPIQTGYKAIDAMVPIGRGQRELIIGDRQTGKTALAIDTIINQKKINLPCVYVAIGQKLSTIINVVKKLDEHDALLNTIVVVASASEAASLQYLAPYSGCAMGEYFRDRGKDALIVYDDLSKHAVAYRQISLLLRRPPGREAFPGDVFYLHSRLLERASRVSKEHVKNVTKGKITGKTGSLTALPIIETQSGDVSAFVPTNVISITDGQIFLESNLFNSGIRPAVNAGISVSRVGSAAQTKIIKKLSSGIRTALAQYHELAAFSQFASDLDQTTRKQLIYGQKITELLKQKQYRPMSISEQGLMFFIAENNFLDDISVENIIQFEKEILTYAYNYHLDLMEEINKDGNFNDIIKKKFIELINNFKNS.

169–176 (GDRQTGKT) provides a ligand contact to ATP.

The protein belongs to the ATPase alpha/beta chains family. As to quaternary structure, F-type ATPases have 2 components, CF(1) - the catalytic core - and CF(0) - the membrane proton channel. CF(1) has five subunits: alpha(3), beta(3), gamma(1), delta(1), epsilon(1). CF(0) has three main subunits: a(1), b(2) and c(9-12). The alpha and beta chains form an alternating ring which encloses part of the gamma chain. CF(1) is attached to CF(0) by a central stalk formed by the gamma and epsilon chains, while a peripheral stalk is formed by the delta and b chains.

It localises to the cell membrane. It catalyses the reaction ATP + H2O + 4 H(+)(in) = ADP + phosphate + 5 H(+)(out). In terms of biological role, produces ATP from ADP in the presence of a proton gradient across the membrane. The alpha chain is a regulatory subunit. This Buchnera aphidicola subsp. Schizaphis graminum (strain Sg) protein is ATP synthase subunit alpha.